The primary structure comprises 223 residues: Cytidylate kinase (223 aa).

10–18 is an ATP binding site; it reads GPAGSGKSS.

It belongs to the cytidylate kinase family. Type 1 subfamily.

The protein resides in the cytoplasm. It carries out the reaction CMP + ATP = CDP + ADP. The catalysed reaction is dCMP + ATP = dCDP + ADP. The protein is Cytidylate kinase of Pseudothermotoga lettingae (strain ATCC BAA-301 / DSM 14385 / NBRC 107922 / TMO) (Thermotoga lettingae).